We begin with the raw amino-acid sequence, 429 residues long: Histidine--tRNA ligase (429 aa).

Belongs to the class-II aminoacyl-tRNA synthetase family. In terms of assembly, homodimer.

The protein resides in the cytoplasm. The catalysed reaction is tRNA(His) + L-histidine + ATP = L-histidyl-tRNA(His) + AMP + diphosphate + H(+). This chain is Histidine--tRNA ligase, found in Streptococcus pneumoniae (strain Taiwan19F-14).